Here is a 179-residue protein sequence, read N- to C-terminus: Diphosphoinositol polyphosphate phosphohydrolase 2 (179 aa).

Substrate is bound by residues R9, 17–19, and 38–40; these read KKR and SSR. A Nudix hydrolase domain is found at 17-143; it reads KKRAACLCFR…VHAEYLERLK (127 aa). Positions 49 and 65 each coordinate Mg(2+). A Nudix box motif is present at residues 50 to 71; the sequence is GGVEPEEEPGGAAAREVYEEAG. Residue E68 is the Proton acceptor of the active site. E69 is a Mg(2+) binding site. Residues 88–90, R114, and K132 each bind substrate; that span reads RKH.

It belongs to the Nudix hydrolase family. DIPP subfamily. Requires Mg(2+) as cofactor. It depends on Mn(2+) as a cofactor.

The protein resides in the cytoplasm. The enzyme catalyses diphospho-myo-inositol polyphosphate + H2O = myo-inositol polyphosphate + phosphate.. The catalysed reaction is 5-diphospho-1D-myo-inositol 1,2,3,4,6-pentakisphosphate + H2O = 1D-myo-inositol hexakisphosphate + phosphate + H(+). It catalyses the reaction 3,5-bis(diphospho)-1D-myo-inositol 1,2,4,6-tetrakisphosphate + H2O = 3-diphospho-1D-myo-inositol 1,2,4,5,6-pentakisphosphate + phosphate + 2 H(+). It carries out the reaction 5-diphospho-1D-myo-inositol 1,3,4,6-tetrakisphosphate + H2O = 1D-myo-inositol 1,3,4,5,6-pentakisphosphate + phosphate + H(+). The enzyme catalyses P(1),P(6)-bis(5'-adenosyl) hexaphosphate + H2O = 2 ATP + 2 H(+). The catalysed reaction is P(1),P(5)-bis(5'-adenosyl) pentaphosphate + H2O = ADP + ATP + 2 H(+). It catalyses the reaction 5-phospho-alpha-D-ribose 1-diphosphate + H2O = alpha-D-ribose 1,5-bisphosphate + phosphate + H(+). Functionally, cleaves the beta-phosphate from diphosphoinositol polyphosphates such as PP-InsP5 (diphosphoinositol pentakisphosphate), PP-InsP4 (diphosphoinositol tetrakisphosphate) and [PP]2-InsP4 (bisdiphosphoinositol tetrakisphosphate), suggesting that it may play a role in signal transduction. Diadenosine polyphosphates, particularly Ap6A (P(1),P(6)-bis(5a-adenosyl) hexaphosphate) and Ap5A (P(1),P(5)-bis(5'-adenosyl) pentaphosphate) are downstream effectors of a signaling cascade that regulates cardiac KATP channels, can also be substrates, although with lower preference than the diphosphoinositol polyphosphates. Can also catalyze the hydrolysis of 5-phosphoribose 1-diphosphate, generating the glycolytic activator ribose 1,5-bisphosphate. Does not play a role in U8 snoRNA decapping activity. Binds U8 snoRNA. The polypeptide is Diphosphoinositol polyphosphate phosphohydrolase 2 (Rattus norvegicus (Rat)).